The sequence spans 95 residues: Large ribosomal subunit protein bL21 (95 aa).

Belongs to the bacterial ribosomal protein bL21 family. In terms of assembly, part of the 50S ribosomal subunit. Contacts protein L20.

Functionally, this protein binds to 23S rRNA in the presence of protein L20. In Chlorobaculum tepidum (strain ATCC 49652 / DSM 12025 / NBRC 103806 / TLS) (Chlorobium tepidum), this protein is Large ribosomal subunit protein bL21.